The primary structure comprises 321 residues: Porin Omp2a (321 aa).

An N-terminal signal peptide occupies residues 1–22; the sequence is MNIKSLLLGSAAALVAASGAQA.

It belongs to the alphaproteobacteria porin family. In terms of assembly, monomer.

The protein localises to the cell outer membrane. Forms passive diffusion pores that allow small molecular weight hydrophilic materials across the outer membrane. This chain is Porin Omp2a (omp2a), found in Brucella abortus (strain S19).